The primary structure comprises 202 residues: LexA repressor (202 aa).

Residues 28–48 constitute a DNA-binding region (H-T-H motif); the sequence is RAEIAQRLGFRSPNAAEEHLK. Residues S119 and K156 each act as for autocatalytic cleavage activity in the active site.

The protein belongs to the peptidase S24 family. In terms of assembly, homodimer.

The enzyme catalyses Hydrolysis of Ala-|-Gly bond in repressor LexA.. Represses a number of genes involved in the response to DNA damage (SOS response), including recA and lexA. Binds to the 16 bp palindromic sequence 5'-CTGTATATATATACAG-3'. In the presence of single-stranded DNA, RecA interacts with LexA causing an autocatalytic cleavage which disrupts the DNA-binding part of LexA, leading to derepression of the SOS regulon and eventually DNA repair. The protein is LexA repressor of Klebsiella pneumoniae subsp. pneumoniae (strain ATCC 700721 / MGH 78578).